The chain runs to 761 residues: Semaphorin-4A (761 aa).

A signal peptide spans 1-32; sequence MALPALGLDPWSLLGLFLFQLLQLLLPTTTAG. Residues 33–683 lie on the Extracellular side of the membrane; the sequence is GGGQGPMPRV…LAAQQSYWPH (651 aa). A Sema domain is found at 36 to 494; sequence QGPMPRVRYY…FSGGVWRVPR (459 aa). The cysteines at positions 113 and 124 are disulfide-linked. Residues Asn120 and Asn135 are each glycosylated (N-linked (GlcNAc...) asparagine). 3 disulfide bridges follow: Cys142–Cys151, Cys269–Cys379, and Cys293–Cys339. Asn496 carries an N-linked (GlcNAc...) asparagine glycan. The PSI domain occupies 496–548; the sequence is NCSVYESCVDCVLARDPHCAWDPESRTCCLLSAPNLNSWKQDMERGNPEWACA. Disulfide bonds link Cys497/Cys514, Cys506/Cys523, and Cys580/Cys624. An Ig-like C2-type domain is found at 573 to 631; it reads NSILELPCPHLSALASYYWSHGPAAVPEASSTVYNGSLLLIVQDGVGGLYQCWATENGF. N-linked (GlcNAc...) asparagine glycosylation occurs at Asn607. A helical transmembrane segment spans residues 684 to 704; the sequence is FVTVTVLFALVLSGALIILVA. The Cytoplasmic portion of the chain corresponds to 705-761; the sequence is SPLRALRARGKVQGCETLRPGEKAPLSREQHLQSPKECRTSASDVDADNNCLGTEVA. Positions 722–749 are disordered; that stretch reads LRPGEKAPLSREQHLQSPKECRTSASDV. Residues 723 to 743 show a composition bias toward basic and acidic residues; the sequence is RPGEKAPLSREQHLQSPKECR.

The protein belongs to the semaphorin family. As to quaternary structure, interacts with PLXNB1, PLXNB2, PLXNB3, PLXND1 and TIMD2.

Its subcellular location is the cell membrane. Cell surface receptor for PLXNB1, PLXNB2, PLXNB3 and PLXND1 that plays an important role in cell-cell signaling. Regulates glutamatergic and GABAergic synapse development. Promotes the development of inhibitory synapses in a PLXNB1-dependent manner and promotes the development of excitatory synapses in a PLXNB2-dependent manner. Plays a role in priming antigen-specific T-cells, promotes differentiation of Th1 T-helper cells, and thereby contributes to adaptive immunity. Promotes phosphorylation of TIMD2. Inhibits angiogenesis. Promotes axon growth cone collapse. Inhibits axonal extension by providing local signals to specify territories inaccessible for growing axons. The polypeptide is Semaphorin-4A (SEMA4A) (Homo sapiens (Human)).